The following is a 251-amino-acid chain: Ubiquinone/menaquinone biosynthesis C-methyltransferase UbiE (251 aa).

Residues Thr-74, Asp-95, and 123–124 (NA) contribute to the S-adenosyl-L-methionine site.

This sequence belongs to the class I-like SAM-binding methyltransferase superfamily. MenG/UbiE family.

It catalyses the reaction a 2-demethylmenaquinol + S-adenosyl-L-methionine = a menaquinol + S-adenosyl-L-homocysteine + H(+). The enzyme catalyses a 2-methoxy-6-(all-trans-polyprenyl)benzene-1,4-diol + S-adenosyl-L-methionine = a 5-methoxy-2-methyl-3-(all-trans-polyprenyl)benzene-1,4-diol + S-adenosyl-L-homocysteine + H(+). The protein operates within quinol/quinone metabolism; menaquinone biosynthesis; menaquinol from 1,4-dihydroxy-2-naphthoate: step 2/2. It functions in the pathway cofactor biosynthesis; ubiquinone biosynthesis. Its function is as follows. Methyltransferase required for the conversion of demethylmenaquinol (DMKH2) to menaquinol (MKH2) and the conversion of 2-polyprenyl-6-methoxy-1,4-benzoquinol (DDMQH2) to 2-polyprenyl-3-methyl-6-methoxy-1,4-benzoquinol (DMQH2). This Pseudoalteromonas translucida (strain TAC 125) protein is Ubiquinone/menaquinone biosynthesis C-methyltransferase UbiE.